Reading from the N-terminus, the 430-residue chain is DD-carboxypeptidase/endopeptidase Mpg (430 aa).

Residues histidine 295, aspartate 299, and histidine 375 each coordinate Zn(2+).

This sequence belongs to the peptidase M23B family. Monomer. Requires Zn(2+) as cofactor. In terms of processing, likely to be synthesized as a proenzyme. The cleavage of the N-terminal domain is probably required for the activation of the enzyme.

Its subcellular location is the cell outer membrane. Peptidoglycan (PG) degradation activity is completely inhibited by zinc chelating EDTA and phenanthroline. In terms of biological role, has both endopeptidase and DD-carboxypeptidase activities. Degrades cell wall peptidoglycan (PG) to allow consummate expression of pili. Degrades N.gonorrhoeae and E.coli PG side chains in vitro. Required for proper piliation, which in turn is required for normal colony morphology, resistance to H(2)O(2) damage and defense against killing by human polymorphonuclear leukocytes (PMNs). Involved in type IV pilus biogenesis. Involved in resistance against non-oxidative killing by adherent CXCL8/IL8-primed human PMNs. Protects from killing by PMN-produced antimicrobial factors, which kill by a mechanism completely independent of reactive oxygen species (ROS) production of the PMNs. Provides protection against oxidative damage caused by peroxides H(2)O(2) and cumene hydroperoxide in vitro. This Neisseria gonorrhoeae (strain ATCC 700825 / FA 1090) protein is DD-carboxypeptidase/endopeptidase Mpg.